The sequence spans 417 residues: UDP-N-acetylglucosamine 1-carboxyvinyltransferase 3 (417 aa).

Position 22-23 (K22–N23) interacts with phosphoenolpyruvate. Position 92 (R92) interacts with UDP-N-acetyl-alpha-D-glucosamine. Catalysis depends on C116, which acts as the Proton donor. Residue C116 is modified to 2-(S-cysteinyl)pyruvic acid O-phosphothioketal. Residues R121 to Q125, D304, and I326 contribute to the UDP-N-acetyl-alpha-D-glucosamine site.

The protein belongs to the EPSP synthase family. MurA subfamily.

Its subcellular location is the cytoplasm. It catalyses the reaction phosphoenolpyruvate + UDP-N-acetyl-alpha-D-glucosamine = UDP-N-acetyl-3-O-(1-carboxyvinyl)-alpha-D-glucosamine + phosphate. It functions in the pathway cell wall biogenesis; peptidoglycan biosynthesis. Its function is as follows. Cell wall formation. Adds enolpyruvyl to UDP-N-acetylglucosamine. This Caldanaerobacter subterraneus subsp. tengcongensis (strain DSM 15242 / JCM 11007 / NBRC 100824 / MB4) (Thermoanaerobacter tengcongensis) protein is UDP-N-acetylglucosamine 1-carboxyvinyltransferase 3.